Reading from the N-terminus, the 665-residue chain is Succinate dehydrogenase [ubiquinone] flavoprotein subunit B, mitochondrial (665 aa).

The N-terminal 45 residues, 1 to 45, are a transit peptide targeting the mitochondrion; the sequence is MALLKVAPSRLLSRALQLTSTLQNCTATSIAARRNFHFTVYGRKD. Residues Ala-72, Ala-75, Thr-94, Lys-95, and Ser-101 each contribute to the FAD site. The residue at position 102 (His-102) is a Tele-8alpha-FAD histidine. Residues Thr-103, Gly-108, Ala-224, and Asp-278 each contribute to the FAD site. Oxaloacetate-binding residues include His-299, Arg-343, and His-410. Arg-343 functions as the Proton acceptor in the catalytic mechanism. Residue Glu-443 participates in FAD binding. Residues Arg-454 and Ala-457 each contribute to the oxaloacetate site. Residues Ser-459 and Leu-460 each coordinate FAD.

It belongs to the FAD-dependent oxidoreductase 2 family. FRD/SDH subfamily. As to quaternary structure, component of complex II composed of four subunits: a flavoprotein (FP), an iron-sulfur protein (IP), and a cytochrome b composed of a large and a small subunit. FAD is required as a cofactor.

Its subcellular location is the mitochondrion inner membrane. The catalysed reaction is a ubiquinone + succinate = a ubiquinol + fumarate. The enzyme catalyses (R)-malate + a quinone = enol-oxaloacetate + a quinol. It carries out the reaction (S)-malate + a quinone = enol-oxaloacetate + a quinol. It functions in the pathway carbohydrate metabolism; tricarboxylic acid cycle; fumarate from succinate (eukaryal route): step 1/1. With respect to regulation, enol-oxaloacetate inhibits the succinate dehydrogenase activity. Functionally, flavoprotein (FP) subunit of succinate dehydrogenase (SDH) that is involved in complex II of the mitochondrial electron transport chain and is responsible for transferring electrons from succinate to ubiquinone (coenzyme Q). SDH also oxidizes malate to the non-canonical enol form of oxaloacetate, enol-oxaloacetate. Enol-oxaloacetate, which is a potent inhibitor of the succinate dehydrogenase activity, is further isomerized into keto-oxaloacetate. In Xenopus laevis (African clawed frog), this protein is Succinate dehydrogenase [ubiquinone] flavoprotein subunit B, mitochondrial (sdha-b).